We begin with the raw amino-acid sequence, 704 residues long: mRNA (2'-O-methyladenosine-N(6)-)-methyltransferase (704 aa).

Positions 1 to 33 (MANENHGSPREEASLLSHSPGTSNQSQPCSPKP) are disordered. The segment covering 16–29 (LSHSPGTSNQSQPC) has biased composition (polar residues). A Phosphoserine modification is found at S30. The WW domain maps to 43–77 (ELVHAGWEKCWSRRENRPYYFNRFTNQSLWEMPVL). Residues 88–151 (GLNATPLPQD…PSSPSIPGTP (64 aa)) are disordered. Positions 109 to 113 (KPRKR) match the Nuclear localization signal motif. Phosphoserine is present on S116. Polar residues predominate over residues 136–149 (PTGQSVPSSPSIPG). T152 is modified (phosphothreonine). Substrate-binding residues include R235 and R265. 553 to 556 (NPPF) lines the S-adenosyl-L-methionine pocket. Substrate-binding positions include E558 and 588–592 (WREPP). Residue 614–616 (FEH) coordinates S-adenosyl-L-methionine. Positions 663 to 704 (LSAAYRQSGRSHSSGSSSSSSSEAKDRDSGREQGPSREPHPT) are disordered. Positions 669–684 (QSGRSHSSGSSSSSSS) match the Nuclear localization signal motif. The span at 670-684 (SGRSHSSGSSSSSSS) shows a compositional bias: low complexity. Basic and acidic residues predominate over residues 685–704 (EAKDRDSGREQGPSREPHPT).

It belongs to the CAPAM family. Interacts with POLR2A; interacts with the phosphorylated C-terminal domain (CTD) of POLR2A. Ubiquitous.

The protein localises to the nucleus. It carries out the reaction a 5'-end (N(7)-methyl 5'-triphosphoguanosine)-(2'-O-methyladenosine) in mRNA + S-adenosyl-L-methionine = a 5'-end (N(7)-methyl 5'-triphosphoguanosine)-(N(6),2'-O-dimethyladenosine) in mRNA + S-adenosyl-L-homocysteine + H(+). With respect to regulation, cap-specific adenosine methyltransferase activity is inhibited by zinc. Functionally, cap-specific adenosine methyltransferase that catalyzes formation of N(6),2'-O-dimethyladenosine cap (m6A(m)) by methylating the adenosine at the second transcribed position of capped mRNAs. Recruited to the early elongation complex of RNA polymerase II (RNAPII) via interaction with POLR2A and mediates formation of m6A(m) co-transcriptionally. In Homo sapiens (Human), this protein is mRNA (2'-O-methyladenosine-N(6)-)-methyltransferase.